A 106-amino-acid polypeptide reads, in one-letter code: Nucleoid-associated protein Nham_0463 (106 aa).

It belongs to the YbaB/EbfC family. In terms of assembly, homodimer.

Its subcellular location is the cytoplasm. It is found in the nucleoid. Functionally, binds to DNA and alters its conformation. May be involved in regulation of gene expression, nucleoid organization and DNA protection. In Nitrobacter hamburgensis (strain DSM 10229 / NCIMB 13809 / X14), this protein is Nucleoid-associated protein Nham_0463.